An 817-amino-acid polypeptide reads, in one-letter code: Cargo-transport protein YPP1 (817 aa).

The protein belongs to the YPP1 family. In terms of assembly, interacts with ribosomes.

Its subcellular location is the cytoplasmic granule. It localises to the cell membrane. Functionally, involved in endocytosis. The protein is Cargo-transport protein YPP1 (YPP1) of Saccharomyces cerevisiae (strain ATCC 204508 / S288c) (Baker's yeast).